A 189-amino-acid chain; its full sequence is ATP synthase subunit b (189 aa).

Residues 7-27 (LLIAALAVAPLAHAAEGGFVG) form a helical membrane-spanning segment.

This sequence belongs to the ATPase B chain family. In terms of assembly, F-type ATPases have 2 components, F(1) - the catalytic core - and F(0) - the membrane proton channel. F(1) has five subunits: alpha(3), beta(3), gamma(1), delta(1), epsilon(1). F(0) has three main subunits: a(1), b(2) and c(10-14). The alpha and beta chains form an alternating ring which encloses part of the gamma chain. F(1) is attached to F(0) by a central stalk formed by the gamma and epsilon chains, while a peripheral stalk is formed by the delta and b chains.

The protein resides in the cell inner membrane. Its function is as follows. F(1)F(0) ATP synthase produces ATP from ADP in the presence of a proton or sodium gradient. F-type ATPases consist of two structural domains, F(1) containing the extramembraneous catalytic core and F(0) containing the membrane proton channel, linked together by a central stalk and a peripheral stalk. During catalysis, ATP synthesis in the catalytic domain of F(1) is coupled via a rotary mechanism of the central stalk subunits to proton translocation. In terms of biological role, component of the F(0) channel, it forms part of the peripheral stalk, linking F(1) to F(0). The protein is ATP synthase subunit b of Hyphomonas neptunium (strain ATCC 15444).